Consider the following 56-residue polypeptide: MAVQKSKKSRARRGMRRSHDAISGPSLTVDQTSGETHRRHHVTADGYYKGVQVISK.

Residues 1–16 (MAVQKSKKSRARRGMR) are compositionally biased toward basic residues. The tract at residues 1-56 (MAVQKSKKSRARRGMRRSHDAISGPSLTVDQTSGETHRRHHVTADGYYKGVQVISK) is disordered. The segment covering 25-34 (PSLTVDQTSG) has biased composition (polar residues).

It belongs to the bacterial ribosomal protein bL32 family.

In Pseudoalteromonas translucida (strain TAC 125), this protein is Large ribosomal subunit protein bL32.